The primary structure comprises 150 residues: UPF0178 protein Shewana3_1627 (150 aa).

The protein belongs to the UPF0178 family.

This is UPF0178 protein Shewana3_1627 from Shewanella sp. (strain ANA-3).